The sequence spans 670 residues: Acetolactate synthase, chloroplastic (670 aa).

Composition is skewed to low complexity over residues 1–48 and 55–77; these read MAAA…SSSS and KSSS…TTPS. Residues 1–55 constitute a chloroplast transit peptide; the sequence is MAAATTTTTTSSSISFSTKPSPSSSKSPLPISRFSLPFSLNPNKSSSSSRRRGIK. The interval 1–94 is disordered; it reads MAAATTTTTT…ETFISRFAPD (94 aa). E144 lines the thiamine diphosphate pocket. Residue S186 coordinates FAD. Residue Q207 participates in thiamine diphosphate binding. (R)-imazaquin is bound by residues K220 and R246. FAD is bound at residue R246. K256 is a chlorimuron-ethyl binding site. FAD-binding positions include G308 and 331-332; that span reads TL. C340 is modified (cysteine sulfinic acid (-SO2H)). Residues 349 to 352 and 371 to 375 contribute to the FAD site; these read LGMH and GVRFD. 376–377 lines the chlorimuron-ethyl pocket; that stretch reads DR. FAD is bound by residues 395–396 and 414–415; these read DI and DV. Positions 414 to 446 form a coiled coil; the sequence is DVKLALQGMNKVLENRAEELKLDFGVWRNELNV. A thiamine diphosphate-binding site is contributed by 487 to 488; that stretch reads QH. 508–509 contacts FAD; that stretch reads GG. Thiamine diphosphate contacts are provided by residues 511–513, 538–540, and 565–570; these read GAM, DGS, and NQHLGM. Mg(2+) contacts are provided by D538, N565, and H567. Residues W574 and S653 each contribute to the chlorimuron-ethyl site.

The protein belongs to the TPP enzyme family. Homodimer or homotetramer. The acetolactate synthase complex contains both large catalytic subunits and small regulatory subunits. Homodimer. The acetolactate synthase complex contains 4 homodimers of the large catalytic subunits, and 1 homotetramer of the small regulatory subunits. It depends on Mg(2+) as a cofactor. FAD is required as a cofactor. The cofactor is thiamine diphosphate.

The protein localises to the plastid. It localises to the chloroplast. It catalyses the reaction 2 pyruvate + H(+) = (2S)-2-acetolactate + CO2. It functions in the pathway amino-acid biosynthesis; L-isoleucine biosynthesis; L-isoleucine from 2-oxobutanoate: step 1/4. The protein operates within amino-acid biosynthesis; L-valine biosynthesis; L-valine from pyruvate: step 1/4. Its activity is regulated as follows. Inhibited by asymmetric aryl disulfides, triazolopyrimidine sulfonanilide compounds, isatin derivatives, and sulfonylurea and imidazolinone herbicides. Insensitive to feed-back inhibition by branched-chain amino acids. Functionally, catalyzes the formation of acetolactate from pyruvate, the first step in valine and isoleucine biosynthesis. In Arabidopsis thaliana (Mouse-ear cress), this protein is Acetolactate synthase, chloroplastic (ALS).